Consider the following 129-residue polypeptide: Fluoride-specific ion channel FluC (129 aa).

A run of 4 helical transmembrane segments spans residues 1–21 (MLMK…LGSA), 35–55 (GGLP…IGFI), 71–91 (LFLV…IFEN), and 105–125 (AYLA…TFFA). Residues Gly79 and Thr82 each coordinate Na(+).

It belongs to the fluoride channel Fluc/FEX (TC 1.A.43) family.

Its subcellular location is the cell inner membrane. It catalyses the reaction fluoride(in) = fluoride(out). Na(+) is not transported, but it plays an essential structural role and its presence is essential for fluoride channel function. Its function is as follows. Fluoride-specific ion channel. Important for reducing fluoride concentration in the cell, thus reducing its toxicity. This Chlorobium phaeobacteroides (strain DSM 266 / SMG 266 / 2430) protein is Fluoride-specific ion channel FluC.